A 469-amino-acid chain; its full sequence is Cysteine--tRNA ligase (469 aa).

Position 29 (cysteine 29) interacts with Zn(2+). A 'HIGH' region motif is present at residues proline 31–asparagine 41. Zn(2+) contacts are provided by cysteine 210, histidine 235, and glutamate 239. Residues lysine 267–serine 271 carry the 'KMSKS' region motif. Position 270 (lysine 270) interacts with ATP.

The protein belongs to the class-I aminoacyl-tRNA synthetase family. Monomer. Zn(2+) is required as a cofactor.

The protein resides in the cytoplasm. It carries out the reaction tRNA(Cys) + L-cysteine + ATP = L-cysteinyl-tRNA(Cys) + AMP + diphosphate. This is Cysteine--tRNA ligase from Thermosipho melanesiensis (strain DSM 12029 / CIP 104789 / BI429).